We begin with the raw amino-acid sequence, 214 residues long: Large ribosomal subunit protein uL4 (214 aa).

Positions Arg-43–Phe-83 are disordered.

Belongs to the universal ribosomal protein uL4 family. As to quaternary structure, part of the 50S ribosomal subunit.

One of the primary rRNA binding proteins, this protein initially binds near the 5'-end of the 23S rRNA. It is important during the early stages of 50S assembly. It makes multiple contacts with different domains of the 23S rRNA in the assembled 50S subunit and ribosome. In terms of biological role, forms part of the polypeptide exit tunnel. The sequence is that of Large ribosomal subunit protein uL4 from Hyphomonas neptunium (strain ATCC 15444).